We begin with the raw amino-acid sequence, 437 residues long: Serine hydroxymethyltransferase (437 aa).

(6S)-5,6,7,8-tetrahydrofolate contacts are provided by residues leucine 130 and 134–136; that span reads GHL. Lysine 239 bears the N6-(pyridoxal phosphate)lysine mark.

The protein belongs to the SHMT family. Homodimer. Pyridoxal 5'-phosphate is required as a cofactor.

The protein resides in the cytoplasm. It catalyses the reaction (6R)-5,10-methylene-5,6,7,8-tetrahydrofolate + glycine + H2O = (6S)-5,6,7,8-tetrahydrofolate + L-serine. The protein operates within one-carbon metabolism; tetrahydrofolate interconversion. It participates in amino-acid biosynthesis; glycine biosynthesis; glycine from L-serine: step 1/1. In terms of biological role, catalyzes the reversible interconversion of serine and glycine with tetrahydrofolate (THF) serving as the one-carbon carrier. This reaction serves as the major source of one-carbon groups required for the biosynthesis of purines, thymidylate, methionine, and other important biomolecules. Also exhibits THF-independent aldolase activity toward beta-hydroxyamino acids, producing glycine and aldehydes, via a retro-aldol mechanism. The chain is Serine hydroxymethyltransferase from Bartonella quintana (strain Toulouse) (Rochalimaea quintana).